A 431-amino-acid polypeptide reads, in one-letter code: Enolase (431 aa).

Q166 contributes to the (2R)-2-phosphoglycerate binding site. E208 acts as the Proton donor in catalysis. Mg(2+)-binding residues include D245, E288, and D315. (2R)-2-phosphoglycerate is bound by residues K340, R369, S370, and K391. K340 functions as the Proton acceptor in the catalytic mechanism.

It belongs to the enolase family. Mg(2+) serves as cofactor.

Its subcellular location is the cytoplasm. The protein resides in the secreted. The protein localises to the cell surface. It carries out the reaction (2R)-2-phosphoglycerate = phosphoenolpyruvate + H2O. It participates in carbohydrate degradation; glycolysis; pyruvate from D-glyceraldehyde 3-phosphate: step 4/5. Its function is as follows. Catalyzes the reversible conversion of 2-phosphoglycerate (2-PG) into phosphoenolpyruvate (PEP). It is essential for the degradation of carbohydrates via glycolysis. The protein is Enolase of Clostridium tetani (strain Massachusetts / E88).